A 264-amino-acid polypeptide reads, in one-letter code: MKKLKLHGFNNLTKSLSFCIYDICYAKTAEERDGYIAYIDELYNANRLTEILTETCSIIGANILNIARQDYEPQGASVTILVSEEPVDPKLIDQTEHPGPLPETVVAHLDKSHICVHTYPESHPEGGLCTFRADIEVSTCGVISPLKALNYLIHQLESDIVTIDYRVRGFTRDINGMKHFIDHEINSIQNFMSDDMKSLYDMVDVNVYQENIFHTKMLLKEFDLKHYMFHTRPEELTAEERKVITDLLWKEMREIYYGRNIPAV.

S112 (schiff-base intermediate with substrate; via pyruvic acid) is an active-site residue. S112 is subject to Pyruvic acid (Ser); by autocatalysis. The active-site Proton acceptor; for processing activity is H117. The active-site Proton donor; for catalytic activity is the C140.

Belongs to the prokaryotic AdoMetDC family. Type 2 subfamily. Heterooctamer of four alpha and four beta chains arranged as a tetramer of alpha/beta heterodimers. Pyruvate is required as a cofactor. In terms of processing, is synthesized initially as an inactive proenzyme. Formation of the active enzyme involves a self-maturation process in which the active site pyruvoyl group is generated from an internal serine residue via an autocatalytic post-translational modification. Two non-identical subunits are generated from the proenzyme in this reaction, and the pyruvate is formed at the N-terminus of the alpha chain, which is derived from the carboxyl end of the proenzyme. The post-translation cleavage follows an unusual pathway, termed non-hydrolytic serinolysis, in which the side chain hydroxyl group of the serine supplies its oxygen atom to form the C-terminus of the beta chain, while the remainder of the serine residue undergoes an oxidative deamination to produce ammonia and the pyruvoyl group blocking the N-terminus of the alpha chain.

The enzyme catalyses S-adenosyl-L-methionine + H(+) = S-adenosyl 3-(methylsulfanyl)propylamine + CO2. It participates in amine and polyamine biosynthesis; S-adenosylmethioninamine biosynthesis; S-adenosylmethioninamine from S-adenosyl-L-methionine: step 1/1. Catalyzes the decarboxylation of S-adenosylmethionine to S-adenosylmethioninamine (dcAdoMet), the propylamine donor required for the synthesis of the polyamines spermine and spermidine from the diamine putrescine. This chain is S-adenosylmethionine decarboxylase proenzyme, found in Klebsiella pneumoniae subsp. pneumoniae (strain ATCC 700721 / MGH 78578).